We begin with the raw amino-acid sequence, 393 residues long: DNA/RNA-binding protein KIN17 (393 aa).

A C2H2-type zinc finger spans residues 28 to 50 (CQMCQKQCRDENGFKCHCMSESH). Residues 51–160 (QRQLLLASEN…RQLELEKKKK (110 aa)) form a winged helix-turn-helix (wHTH) region. N6,N6,N6-trimethyllysine; by METTL22; in vitro is present on K135. K135 is modified (N6-methyllysine). A coiled-coil region spans residues 147-180 (ETIRRQLELEKKKKQDLDDEEKTAKFIEEQVRRG). A compositionally biased stretch (low complexity) spans 209-224 (KGACSSSGATSSKSST). The interval 209–260 (KGACSSSGATSSKSSTLGPSALKTIGSSASVKRKESSQSSTQSKEKKKKKSA) is disordered. The stretch at 250–277 (QSKEKKKKKSALDEIMEIEEEKKRTART) forms a coiled coil. The interval 284–334 (EIIVKIITKKLGEKYHKKKAIVKEVIDKYTAVVKMIDSGDKLKLDQTHLET) is C-terminal subdomain A. Residues 340–391 (GKRILVLNGGYRGNEGTLESINEKTFSATIVIETGPLKGRRVEGIQYEDISK) are C-terminal subdomain B.

Belongs to the KIN17 family. As to quaternary structure, associated with DNA polymerase alpha, RFC1 and cyclin A, in multiprotein DNA replication complexes. Also associates with replication origins at the G1/S phase boundary and throughout the S phase in vivo. (Microbial infection) Interacts with SV40 large T antigen. In terms of tissue distribution, ubiquitously expressed in all tissues examined, with highest levels in skeletal muscle, heart and testis. Differentially expressed in non-tumorigenic and tumorigenic cell lines. Highly expressed in proliferating epithelial keratinocyte cells in vitro (at protein level).

It localises to the nucleus. The protein localises to the cytoplasm. In terms of biological role, involved in DNA replication and the cellular response to DNA damage. May participate in DNA replication factories and create a bridge between DNA replication and repair mediated by high molecular weight complexes. May play a role in illegitimate recombination and regulation of gene expression. May participate in mRNA processing. Binds, in vitro, to double-stranded DNA. Also shown to bind preferentially to curved DNA in vitro and in vivo. Binds via its C-terminal domain to RNA in vitro. This is DNA/RNA-binding protein KIN17 from Homo sapiens (Human).